Here is a 986-residue protein sequence, read N- to C-terminus: Isoleucine--tRNA ligase (986 aa).

The short motif at 534-538 is the 'KMSKS' region element; the sequence is EMHKS. Lysine 537 serves as a coordination point for ATP.

Belongs to the class-I aminoacyl-tRNA synthetase family. IleS type 2 subfamily. As to quaternary structure, monomer. Requires Zn(2+) as cofactor.

It is found in the cytoplasm. It catalyses the reaction tRNA(Ile) + L-isoleucine + ATP = L-isoleucyl-tRNA(Ile) + AMP + diphosphate. Functionally, catalyzes the attachment of isoleucine to tRNA(Ile). As IleRS can inadvertently accommodate and process structurally similar amino acids such as valine, to avoid such errors it has two additional distinct tRNA(Ile)-dependent editing activities. One activity is designated as 'pretransfer' editing and involves the hydrolysis of activated Val-AMP. The other activity is designated 'posttransfer' editing and involves deacylation of mischarged Val-tRNA(Ile). In Saccharolobus solfataricus (strain ATCC 35092 / DSM 1617 / JCM 11322 / P2) (Sulfolobus solfataricus), this protein is Isoleucine--tRNA ligase (ileS).